A 413-amino-acid polypeptide reads, in one-letter code: Chloramphenicol resistance protein CraA (413 aa).

A run of 12 helical transmembrane segments spans residues 18–38 (LMFP…NDLI), 55–75 (WAPS…WLLG), 84–104 (KKVL…ILLT), 110–130 (FLTL…VGYA), 147–167 (LMAN…AFLI), 170–190 (VSWH…WVGL), 228–248 (ALPL…IILV), 260–280 (LAQF…IKII), 289–309 (VLIG…GVVW), 312–332 (YLIP…GISF), 349–369 (TVAA…IELV), and 373–393 (YTQF…ALWF).

It belongs to the major facilitator superfamily.

The protein localises to the cell inner membrane. Functionally, efflux pump that mediates resistance to chloramphenicol. In Acinetobacter baumannii (strain ATCC 19606 / DSM 30007 / JCM 6841 / CCUG 19606 / CIP 70.34 / NBRC 109757 / NCIMB 12457 / NCTC 12156 / 81), this protein is Chloramphenicol resistance protein CraA.